The sequence spans 310 residues: Aspartate carbamoyltransferase catalytic subunit (310 aa).

Carbamoyl phosphate contacts are provided by arginine 60 and threonine 61. Lysine 88 provides a ligand contact to L-aspartate. Carbamoyl phosphate contacts are provided by arginine 110, histidine 138, and glutamine 141. L-aspartate-binding residues include arginine 171 and arginine 225. Residues glycine 266 and proline 267 each coordinate carbamoyl phosphate.

The protein belongs to the aspartate/ornithine carbamoyltransferase superfamily. ATCase family. As to quaternary structure, heterododecamer (2C3:3R2) of six catalytic PyrB chains organized as two trimers (C3), and six regulatory PyrI chains organized as three dimers (R2).

It catalyses the reaction carbamoyl phosphate + L-aspartate = N-carbamoyl-L-aspartate + phosphate + H(+). It participates in pyrimidine metabolism; UMP biosynthesis via de novo pathway; (S)-dihydroorotate from bicarbonate: step 2/3. Its function is as follows. Catalyzes the condensation of carbamoyl phosphate and aspartate to form carbamoyl aspartate and inorganic phosphate, the committed step in the de novo pyrimidine nucleotide biosynthesis pathway. This chain is Aspartate carbamoyltransferase catalytic subunit, found in Christiangramia forsetii (strain DSM 17595 / CGMCC 1.15422 / KT0803) (Gramella forsetii).